Here is a 480-residue protein sequence, read N- to C-terminus: Type VI lipase adapter protein Tla3 (480 aa).

The tract at residues 410–458 (ISSPTPGKKPVHDPFGVDLLPQTASGDGPPPSADPVAPASRLTTRLPPG) is disordered.

Interacts with the Tle3 toxin on one side and with the H2-T6SS component VgrG2b on the other side.

It localises to the cytoplasm. Its function is as follows. Adapter protein that targets and loads the Tle3 toxin onto the H2 type VI secretion system (H2-T6SS) machinery through an interaction with the TTR domain of VgrG2b. Seems specific for Tle3. This chain is Type VI lipase adapter protein Tla3, found in Pseudomonas aeruginosa (strain ATCC 15692 / DSM 22644 / CIP 104116 / JCM 14847 / LMG 12228 / 1C / PRS 101 / PAO1).